Here is a 365-residue protein sequence, read N- to C-terminus: Class I histocompatibility antigen, Gogo-C*0101/C*0102 alpha chain (365 aa).

Residues 1-24 form the signal peptide; sequence MRVMAPRTLILLLSGALALTETWA. An alpha-1 region spans residues 25 to 114; it reads GSHSMRYFFT…LRGYYNQSED (90 aa). Over 25–308 the chain is Extracellular; the sequence is GSHSMRYFFT…EPSSQPTIPI (284 aa). N-linked (GlcNAc...) asparagine glycosylation is present at asparagine 110. The alpha-2 stretch occupies residues 115–206; the sequence is GSHTFQRMYG…ENGKETLQRA (92 aa). Intrachain disulfides connect cysteine 125–cysteine 188 and cysteine 227–cysteine 283. Residues 207 to 298 are alpha-3; sequence DPPKTHVTHH…GLLEPLTLRW (92 aa). In terms of domain architecture, Ig-like C1-type spans 209–297; the sequence is PKTHVTHHPI…KGLLEPLTLR (89 aa). Residues 299 to 308 are connecting peptide; it reads EPSSQPTIPI. The chain crosses the membrane as a helical span at residues 309-332; the sequence is VGIVAGLAVLAVVFTGTVVAAVMC. Topologically, residues 333–365 are cytoplasmic; sequence RRKSSGGKGGSCSQAACSNSAQGSDESLIACKA. 2 positions are modified to phosphoserine: serine 356 and serine 359.

This sequence belongs to the MHC class I family. Heterodimer of an alpha chain and a beta chain (beta-2-microglobulin).

The protein resides in the membrane. Involved in the presentation of foreign antigens to the immune system. This chain is Class I histocompatibility antigen, Gogo-C*0101/C*0102 alpha chain, found in Gorilla gorilla gorilla (Western lowland gorilla).